Reading from the N-terminus, the 356-residue chain is MRVTDFFFELPESLIAHYPMPERSSCRLLSLDGPTGALTHGTFTDLLDKLNPGDLLVFNNTRVIPARLFGRKASGGKIEVLVERMLDDKRILAHIRASKAPKPGAELLLGDDESINATMTARHGALFEVEFNDDRSVLDILNSIGHMPLPPYIDRPDEDADRELYQTVYSEKPGAVAAPTAGLHFDEPLLEKLRAKGVEMAFVTLHVGAGTFQPVRVDTIEDHIMHSEYAEVPQDVVDAVLAAKARGNRVIAVGTTSVRSLESAAQAAKNDLIEPFFDDTQIFIYPGFQYKVVDALVTNFHLPESTLIMLVSAFAGYQHTMNAYKAAVEEKYRFFSYGDAMFITYNPQAINERVGE.

The protein belongs to the QueA family. As to quaternary structure, monomer.

It is found in the cytoplasm. The catalysed reaction is 7-aminomethyl-7-carbaguanosine(34) in tRNA + S-adenosyl-L-methionine = epoxyqueuosine(34) in tRNA + adenine + L-methionine + 2 H(+). The protein operates within tRNA modification; tRNA-queuosine biosynthesis. In terms of biological role, transfers and isomerizes the ribose moiety from AdoMet to the 7-aminomethyl group of 7-deazaguanine (preQ1-tRNA) to give epoxyqueuosine (oQ-tRNA). The sequence is that of S-adenosylmethionine:tRNA ribosyltransferase-isomerase from Shigella boydii serotype 4 (strain Sb227).